Reading from the N-terminus, the 672-residue chain is Protein OS-9 (672 aa).

An N-terminal signal peptide occupies residues M1–G26. Positions A108–H230 constitute an MRH domain. A disulfide bridge connects residues C110 and C123. Positions 117, 118, and 130 each coordinate a mannooligosaccharide derivative. N177 is a glycosylation site (N-linked (GlcNAc...) asparagine). Disulfide bonds link C181-C216 and C196-C228. Residues D182, R188, E212, and Y218 each contribute to the a mannooligosaccharide derivative site. 4 disordered regions span residues R261–V355, K372–S452, E511–V548, and E637–F672. Composition is skewed to basic and acidic residues over residues A263–R281, P294–L310, A320–A338, K372–P386, and P394–E409. Acidic residues predominate over residues M414–Q435. Over residues E637–Y652 the composition is skewed to basic and acidic residues. Over residues D663–F672 the composition is skewed to acidic residues.

Belongs to the OS-9 family. Component of the HRD1 complex, which comprises at least SYNV1/HRD1, DERL1/2, FAM8A1, HERPUD1/HERP, OS9, SEL1L and UBE2J1. FAM8A1 is stabilized by interaction with SYNV1, which prevents its proteasomal degradation. OS9 and UBE2J1 recruitment to the complex may be mediated by SEL1L. Through this complex, may interact with ERLEC1 and HSPA5. Interacts (via C-terminus) with CPNE6 (via second C2 domain); this interaction occurs in a calcium-dependent manner in vitro. Interacts with CREB3. Post-translationally, N-glycosylated. In terms of processing, intramolecular disulfide bonds.

Its subcellular location is the endoplasmic reticulum lumen. Lectin component of the HRD1 complex, which functions in endoplasmic reticulum (ER) quality control and ER-associated degradation (ERAD). Specifically recognizes and binds improperly folded glycoproteins as well as hyperglycosylated proteins, retain them in the ER, and transfers them to the ubiquitination machinery and promote their degradation. Possible targets include TRPV4 as well as hyperglycosylated HSP90B1. The sequence is that of Protein OS-9 (Os9) from Mus musculus (Mouse).